The primary structure comprises 555 residues: DNA repair and recombination protein rhm52 (555 aa).

Residues 148–152 (KRALR) mediate DNA binding. 2 disordered regions span residues 197 to 232 (VVAE…DSFD) and 251 to 555 (HPDE…MKLN). Residues 260–276 (NSHASGSSGNTGASTTN) show a composition bias toward low complexity. Polar residues-rich tracts occupy residues 283–300 (SGNQ…SRMN) and 312–334 (TPNH…QNNH). 2 stretches are compositionally biased toward low complexity: residues 354 to 375 (NNNN…GPQQ) and 382 to 404 (NGAA…AVAR). The segment covering 468–478 (DNPSNNAGNGV) has biased composition (polar residues). Over residues 479–490 (QNQPQKPQPSQQ) the composition is skewed to low complexity. A compositionally biased stretch (polar residues) spans 491 to 500 (RGSILNPQFD). A compositionally biased stretch (low complexity) spans 536 to 547 (PNGTSNGNGTPG).

This sequence belongs to the RAD52 family. As to quaternary structure, part of a complex that includes RAD51, RAD52 and RAD59.

The protein resides in the nucleus. In terms of biological role, involved in DNA double-strand break (DSB) repair and recombination. Promotes the annealing of complementary single-stranded DNA and by stimulation of the RAD51 recombinase. This is DNA repair and recombination protein rhm52 (RHM52) from Pyricularia oryzae (strain 70-15 / ATCC MYA-4617 / FGSC 8958) (Rice blast fungus).